The primary structure comprises 121 residues: Small ribosomal subunit protein uS13 (121 aa).

The interval 91–121 is disordered; it reads HRMSLPVRGQRTRTNARTRRGSRKTVAGRKK. Positions 100-121 are enriched in basic residues; the sequence is QRTRTNARTRRGSRKTVAGRKK.

The protein belongs to the universal ribosomal protein uS13 family. In terms of assembly, part of the 30S ribosomal subunit. Forms a loose heterodimer with protein S19. Forms two bridges to the 50S subunit in the 70S ribosome.

Located at the top of the head of the 30S subunit, it contacts several helices of the 16S rRNA. In the 70S ribosome it contacts the 23S rRNA (bridge B1a) and protein L5 of the 50S subunit (bridge B1b), connecting the 2 subunits; these bridges are implicated in subunit movement. Contacts the tRNAs in the A and P-sites. The protein is Small ribosomal subunit protein uS13 of Prochlorococcus marinus (strain AS9601).